Consider the following 888-residue polypeptide: Phosphoenolpyruvate carboxylase (888 aa).

Active-site residues include histidine 144 and lysine 553.

Belongs to the PEPCase type 1 family. It depends on Mg(2+) as a cofactor.

The catalysed reaction is oxaloacetate + phosphate = phosphoenolpyruvate + hydrogencarbonate. Its function is as follows. Forms oxaloacetate, a four-carbon dicarboxylic acid source for the tricarboxylic acid cycle. This Alcanivorax borkumensis (strain ATCC 700651 / DSM 11573 / NCIMB 13689 / SK2) protein is Phosphoenolpyruvate carboxylase.